The chain runs to 419 residues: Protein FAM181B (419 aa).

Residues 107 to 157 (LMGAAPPGPSSPGAADTPAKRPLAGAQTVPVPVPAHGKAAPRREASQAAAA) form a disordered region.

It belongs to the FAM181 family.

The polypeptide is Protein FAM181B (FAM181B) (Bos taurus (Bovine)).